Here is a 450-residue protein sequence, read N- to C-terminus: Probable ECA polymerase (450 aa).

11 helical membrane-spanning segments follow: residues 6-26, 37-57, 63-83, 118-138, 155-175, 181-201, 207-227, 228-248, 341-361, 378-398, and 410-430; these read FSGL…LTWF, VFFS…TSVL, VGVA…CFYA, VILM…NGFL, GVAL…VYFL, AWLF…MIVG, IIIA…ISLW, MLAA…LKRY, LVVM…GLII, YKAA…IVLA, and VFFI…YWLF.

Belongs to the WzyE family. Probably part of a complex composed of WzxE, WzyE and WzzE.

It localises to the cell inner membrane. The protein operates within bacterial outer membrane biogenesis; enterobacterial common antigen biosynthesis. Functionally, probably involved in the polymerization of enterobacterial common antigen (ECA) trisaccharide repeat units. The polypeptide is Probable ECA polymerase (Shigella sonnei (strain Ss046)).